We begin with the raw amino-acid sequence, 351 residues long: UDP-N-acetylglucosamine--N-acetylmuramyl-(pentapeptide) pyrophosphoryl-undecaprenol N-acetylglucosamine transferase (351 aa).

UDP-N-acetyl-alpha-D-glucosamine-binding positions include 12 to 14 (TGG), Asn124, Arg160, Ser188, Ile239, 258 to 263 (ALTVCE), and Gln283.

The protein belongs to the glycosyltransferase 28 family. MurG subfamily.

The protein resides in the cell inner membrane. The enzyme catalyses di-trans,octa-cis-undecaprenyl diphospho-N-acetyl-alpha-D-muramoyl-L-alanyl-D-glutamyl-meso-2,6-diaminopimeloyl-D-alanyl-D-alanine + UDP-N-acetyl-alpha-D-glucosamine = di-trans,octa-cis-undecaprenyl diphospho-[N-acetyl-alpha-D-glucosaminyl-(1-&gt;4)]-N-acetyl-alpha-D-muramoyl-L-alanyl-D-glutamyl-meso-2,6-diaminopimeloyl-D-alanyl-D-alanine + UDP + H(+). It participates in cell wall biogenesis; peptidoglycan biosynthesis. In terms of biological role, cell wall formation. Catalyzes the transfer of a GlcNAc subunit on undecaprenyl-pyrophosphoryl-MurNAc-pentapeptide (lipid intermediate I) to form undecaprenyl-pyrophosphoryl-MurNAc-(pentapeptide)GlcNAc (lipid intermediate II). The chain is UDP-N-acetylglucosamine--N-acetylmuramyl-(pentapeptide) pyrophosphoryl-undecaprenol N-acetylglucosamine transferase from Actinobacillus pleuropneumoniae serotype 7 (strain AP76).